A 359-amino-acid chain; its full sequence is 3-isopropylmalate dehydrogenase (359 aa).

Substrate is bound by residues R97, R107, R135, and D224. Residues D224, D248, and D252 each coordinate Mg(2+). 282–294 (GSAPDIAGKDIAN) contributes to the NAD(+) binding site.

The protein belongs to the isocitrate and isopropylmalate dehydrogenases family. LeuB type 1 subfamily. As to quaternary structure, homodimer. It depends on Mg(2+) as a cofactor. Mn(2+) serves as cofactor.

The protein resides in the cytoplasm. The catalysed reaction is (2R,3S)-3-isopropylmalate + NAD(+) = 4-methyl-2-oxopentanoate + CO2 + NADH. Its pathway is amino-acid biosynthesis; L-leucine biosynthesis; L-leucine from 3-methyl-2-oxobutanoate: step 3/4. Functionally, catalyzes the oxidation of 3-carboxy-2-hydroxy-4-methylpentanoate (3-isopropylmalate) to 3-carboxy-4-methyl-2-oxopentanoate. The product decarboxylates to 4-methyl-2 oxopentanoate. The chain is 3-isopropylmalate dehydrogenase from Prochlorococcus marinus (strain NATL2A).